A 368-amino-acid polypeptide reads, in one-letter code: Serine/threonine-protein kinase CAK1 (368 aa).

The region spanning 1 to 368 (MKLDSIDITH…QRILQELEKP (368 aa)) is the Protein kinase domain. Asp156 serves as the catalytic Proton acceptor.

The protein belongs to the protein kinase superfamily. CMGC Ser/Thr protein kinase family. CDC2/CDKX subfamily.

The catalysed reaction is L-seryl-[protein] + ATP = O-phospho-L-seryl-[protein] + ADP + H(+). The enzyme catalyses L-threonyl-[protein] + ATP = O-phospho-L-threonyl-[protein] + ADP + H(+). The polypeptide is Serine/threonine-protein kinase CAK1 (CAK1) (Saccharomyces cerevisiae (strain ATCC 204508 / S288c) (Baker's yeast)).